The sequence spans 112 residues: MAAPQFHRPSTITADNVRALGMRGLVLATNNAQFIMDNSYPHPHGTQGAVREFLRGQAAALTDLGVTHANNTFAPQPMFAGDAAAEWLRPSFGLKRTYSPFVVRDPKTPSTP.

The protein belongs to the herpesviridae small capsomere-interacting protein family. In terms of assembly, interacts with the major capsid protein/MCP.

Its subcellular location is the virion. The protein localises to the host nucleus. Functionally, participates in the assembly of the infectious particles by decorating the outer surface of the capsid shell and thus forming a layer between the capsid and the tegument. Complexes composed of the major capsid protein and small capsomere-interacting protein/SCP assemble together in the host cytoplasm and are translocated to the nucleus, where they accumulate and participate in capsid assembly. This chain is Small capsomere-interacting protein, found in Homo sapiens (Human).